The sequence spans 102 residues: uncharacterized protein (102 aa).

The disordered stretch occupies residues 79–102; the sequence is AELLHPSPAPMPPATHGRSAAPCS.

This is an uncharacterized protein from Homo sapiens (Human).